Consider the following 316-residue polypeptide: Putative mannose-6-phosphate isomerase YvyI (316 aa).

H98, E116, and H173 together coordinate Zn(2+). Residue R193 is part of the active site.

The protein belongs to the mannose-6-phosphate isomerase type 1 family. It depends on Zn(2+) as a cofactor.

The catalysed reaction is D-mannose 6-phosphate = D-fructose 6-phosphate. The chain is Putative mannose-6-phosphate isomerase YvyI (yvyI) from Bacillus subtilis (strain 168).